The primary structure comprises 279 residues: Elongation factor Ts (279 aa).

An involved in Mg(2+) ion dislocation from EF-Tu region spans residues 79-82 (TDFV).

Belongs to the EF-Ts family.

It localises to the cytoplasm. Its function is as follows. Associates with the EF-Tu.GDP complex and induces the exchange of GDP to GTP. It remains bound to the aminoacyl-tRNA.EF-Tu.GTP complex up to the GTP hydrolysis stage on the ribosome. In Phytoplasma mali (strain AT), this protein is Elongation factor Ts.